The chain runs to 2183 residues: DNA polymerase epsilon catalytic subunit A (2183 aa).

Residues Cys2066, Cys2069, Cys2090, and Cys2093 each coordinate Zn(2+). The CysA-type zinc finger occupies 2066–2093 (CFKCKNPCDLDLCKDSCCTKSGFRCPLC). Positions 2124, 2127, 2139, and 2141 each coordinate [4Fe-4S] cluster. A CysB motif motif is present at residues 2124-2141 (CDKCRRVKEYELTEFCPC).

This sequence belongs to the DNA polymerase type-B family. In terms of assembly, heterotetramer. Consists of 4 subunits: POL2, DPB2, DPB3 and DPB4. The cofactor is [4Fe-4S] cluster.

The protein localises to the nucleus. It carries out the reaction DNA(n) + a 2'-deoxyribonucleoside 5'-triphosphate = DNA(n+1) + diphosphate. In terms of biological role, DNA polymerase II participates in chromosomal DNA replication. This is DNA polymerase epsilon catalytic subunit A (POL2) from Yarrowia lipolytica (strain CLIB 122 / E 150) (Yeast).